The primary structure comprises 378 residues: Chloroplast stem-loop binding protein of 41 kDa b, chloroplastic (378 aa).

Residues 1 to 50 (MAKMMMLQQHQPSFSLLTSSLSDFNGAKLHLQVQYKRKVHQPKGALYVSA) constitute a chloroplast transit peptide. Ser-240 bears the Phosphoserine mark.

Belongs to the NAD(P)-dependent epimerase/dehydratase family. In terms of assembly, component of a complex made of CSP41A, CSP41B, ribosomes, and the plastid-encoded RNA polymerase. Interacts with CSP41A. Binds DNA when in complex with PRIN2. As to expression, highly expressed in seedlings, particularly in photosynthetically active organs. Mostly expressed in young and mature leaves, and, to a lower extent, in flowers. Low expression in etiolated seedlings compared to green seedlings.

The protein resides in the plastid. It is found in the chloroplast. Its subcellular location is the plastoglobule. The protein localises to the cytoplasm. In terms of biological role, binds and cleaves RNA, particularly in stem-loops. Associates with pre-ribosomal particles in chloroplasts, and participates in chloroplast ribosomal RNA metabolism, probably during the final steps of 23S rRNA maturation. May enhance transcription by the plastid-encoded polymerase and translation in plastid via the stabilization of ribosome assembly intermediates. Required for chloroplast integrity. Involved in the regulation of the circadian system. Involved in the regulation of heteroglycans and monosaccharide mobilization. Required for full expression of genes transcribed by the plastid-encoded RNA polymerase (PEP). Essential for embryo development. This Arabidopsis thaliana (Mouse-ear cress) protein is Chloroplast stem-loop binding protein of 41 kDa b, chloroplastic (CSP41B).